A 457-amino-acid polypeptide reads, in one-letter code: MITLIFISIGMTLTSFVVSKNNLWPVTILQSAFLSIAAIALINNHWISKWHNFINSVDSMQLPLLVLSCWLTPLALIASKGHLNNLPITNQRTFIVLVIIITTSLIITFSSLELILFYIAFETTLVPTLILITRWGALMERFQAGLYFIFYTLFGSLPLLISLIALYFSSNSLSIPNVELVWLTTNSSTSLTVWWLLSILAFLVKMPIYGFHLWLPKAHVEAPVAGSMILAAILLKLGGYGLMRLISLFSTTSLNFSSLPLVVFCCWGALVTSIICIRQTDLKALIAYSSVGHMSIVAAGVFSQTIWGINGALMLMIAHGLVSSALFALANTMYERSGTRTLVITRGMKLILPLSTFWWLIMCAANLGFPYSNLIGEILYISWYGWSIWCSYFSNYNCVWGVYSLMIFQVSQQGPSSHFLLNVPTSFSREHLLFLLHLLPLLLIIPTPNLVLISWLK.

The next 12 helical transmembrane spans lie at 22-42 (NLWP…IALI), 59-79 (SMQL…LIAS), 95-115 (IVLV…LELI), 116-136 (LFYI…TRWG), 148-168 (FIFY…ALYF), 191-211 (LTVW…IYGF), 223-243 (PVAG…YGLM), 257-277 (SSLP…IICI), 282-302 (LKAL…AGVF), 309-329 (INGA…LFAL), 350-370 (LILP…LGFP), and 433-453 (LFLL…LVLI).

Belongs to the complex I subunit 4 family.

It localises to the mitochondrion membrane. The enzyme catalyses a ubiquinone + NADH + 5 H(+)(in) = a ubiquinol + NAD(+) + 4 H(+)(out). Its function is as follows. Core subunit of the mitochondrial membrane respiratory chain NADH dehydrogenase (Complex I) that is believed to belong to the minimal assembly required for catalysis. Complex I functions in the transfer of electrons from NADH to the respiratory chain. The immediate electron acceptor for the enzyme is believed to be ubiquinone. The polypeptide is NADH-ubiquinone oxidoreductase chain 4 (ND4) (Arbacia lixula (Black urchin)).